Consider the following 1366-residue polypeptide: DNA-directed RNA polymerase subunit beta (1366 aa).

The protein belongs to the RNA polymerase beta chain family. In terms of assembly, the RNAP catalytic core consists of 2 alpha, 1 beta, 1 beta' and 1 omega subunit. When a sigma factor is associated with the core the holoenzyme is formed, which can initiate transcription.

The catalysed reaction is RNA(n) + a ribonucleoside 5'-triphosphate = RNA(n+1) + diphosphate. Its function is as follows. DNA-dependent RNA polymerase catalyzes the transcription of DNA into RNA using the four ribonucleoside triphosphates as substrates. The sequence is that of DNA-directed RNA polymerase subunit beta from Marinomonas sp. (strain MWYL1).